The sequence spans 182 residues: MLVLVLGDLHIPHRCNSLPAKFKKLLVPGKIQHILCTGNLCTKESYDYLKTLAGDVHIVRGDFDENLNYPEQKVVTVGQFKIGLIHGHQVIPWGDMASLALLQRQFDVDILISGHTHKFEAFEHENKFYINPGSATGAYNALETNIIPSFVLMDIQASTVVTYVYQLIGDDVKVERIEYKKS.

N6-acetyllysine is present on lysine 50.

It belongs to the VPS29 family. Component of the commander complex consisting of the CCC subcomplex and the retriever subcomplex. Component of the heterotrimeric retriever complex formed by VPS26C, VPS29 and VPS35L; within the complex interacts with VPS35L. Component of the heterotrimeric retromer cargo-selective complex (CSC), also described as vacuolar protein sorting subcomplex (VPS) formed by VPS26 (VPS26A or VPS26B), VPS29 and VPS35. The CSC has a highly elongated structure with VPS26 and VPS29 binding independently at opposite distal ends of VPS35 as central platform. The CSC is believed to associate with variable sorting nexins to form functionally distinct retromer complex variants. The originally described retromer complex (also called SNX-BAR retromer) is a pentamer containing the CSC and a heterodimeric membrane-deforming subcomplex formed between SNX1 or SNX2 and SNX5 or SNX6 (also called SNX-BAR subcomplex); the respective CSC and SNX-BAR subcomplexes associate with low affinity. The CSC associates with SNX3 to form a SNX3-retromer complex. The CSC associates with SNX27, the WASH complex and the SNX-BAR subcomplex to form the SNX27-retromer complex. Interacts with VPS26A, VPS35, SNX1, SNX2, SNX3, SNX27, WASHC5. Interacts with TBC1D5; this interaction is blocked by VPS35L in the retriever complex. Interacts with SNX17; the interaction is indirect; SNX17 (via its C-terminus) interacts with the retriever complex (via VPS26C and VPS35L). Interacts with VPS26B and ANKRD27.

The protein localises to the cytoplasm. The protein resides in the membrane. It localises to the endosome membrane. Functionally, component of the commander complex that is essential for endosomal recycling of transmembrane cargos; the commander complex is composed of the CCC subcomplex and the retriever subcomplex. Component of the retriever complex, which is a heterotrimeric complex related to retromer cargo-selective complex (CSC) and essential for retromer-independent retrieval and recycling of numerous cargos such as integrin alpha-5/beta-1 (ITGA5:ITGB1). Component of the retromer cargo-selective complex (CSC). The CSC is believed to be the core functional component of retromer or respective retromer complex variants acting to prevent missorting of selected transmembrane cargo proteins into the lysosomal degradation pathway. The recruitment of the CSC to the endosomal membrane involves RAB7A and SNX3. The SNX-BAR retromer mediates retrograde transport of cargo proteins from endosomes to the trans-Golgi network (TGN) and is involved in endosome-to-plasma membrane transport for cargo protein recycling. The SNX3-retromer mediates the retrograde endosome-to-TGN transport of WLS distinct from the SNX-BAR retromer pathway. The SNX27-retromer is believed to be involved in endosome-to-plasma membrane trafficking and recycling of a broad spectrum of cargo proteins. The CSC seems to act as recruitment hub for other proteins, such as the WASH complex and TBC1D5. Required to regulate transcytosis of the polymeric immunoglobulin receptor (pIgR-pIgA). In the endosomes, retriever complex drives the retrieval and recycling of NxxY-motif-containing cargo proteins by coupling to SNX17, a cargo essential for the homeostatic maintenance of numerous cell surface proteins associated with processes that include cell migration, cell adhesion, nutrient supply and cell signaling. The recruitment of the retriever complex to the endosomal membrane involves CCC and WASH complexes. Involved in GLUT1 endosome-to-plasma membrane trafficking; the function is dependent of association with ANKRD27. The sequence is that of Vacuolar protein sorting-associated protein 29 (Vps29) from Mus musculus (Mouse).